Here is a 336-residue protein sequence, read N- to C-terminus: Cytoskeleton protein RodZ (336 aa).

Residues 1–111 (MNTEATHDQN…LGKRRKKRDG (111 aa)) are Cytoplasmic-facing. Residues 19–71 (LRNAREQLGLSQQAVAERLCLKVSTVRDIEEDKAPADLASTFLRGYIRSYARL) form the HTH cro/C1-type domain. The H-T-H motif DNA-binding region spans 30–49 (QQAVAERLCLKVSTVRDIEE). The helical; Signal-anchor for type II membrane protein transmembrane segment at 112–132 (WLMTFTWLVLFVVIGLSGAWW) threads the bilayer. Over 133 to 336 (WQDHKAQQEE…TLNAEQSPAQ (204 aa)) the chain is Periplasmic. Residues 148 to 164 (DQSSAELNNNQSQSVPL) are compositionally biased toward polar residues. The segment at 148-245 (DQSSAELNNN…PLPTDQAGVT (98 aa)) is disordered. Positions 165 to 201 (DTSTTTDQAMATTPTSPVDTTATNTQTPAATTAPSPT) are enriched in low complexity. The segment covering 202-217 (VDSQQNAVVPPSQANV) has biased composition (polar residues). Over residues 218-240 (DTAATPAPAATTTPDGAAPLPTD) the composition is skewed to low complexity.

It belongs to the RodZ family.

It is found in the cell inner membrane. Functionally, cytoskeletal protein that is involved in cell-shape control through regulation of the length of the long axis. This Escherichia coli O7:K1 (strain IAI39 / ExPEC) protein is Cytoskeleton protein RodZ.